Consider the following 102-residue polypeptide: Large ribosomal subunit protein bL21 (102 aa).

The protein belongs to the bacterial ribosomal protein bL21 family. As to quaternary structure, part of the 50S ribosomal subunit. Contacts protein L20.

Its function is as follows. This protein binds to 23S rRNA in the presence of protein L20. The protein is Large ribosomal subunit protein bL21 of Onion yellows phytoplasma (strain OY-M).